A 149-amino-acid chain; its full sequence is Small ribosomal subunit protein bS6 (149 aa).

The interval 93–149 (VGKHEEGPSAMMQKRDRDDRPRRDGDRPDRGGFGDRGPRPDRGDRDDRPRRPREDRA) is disordered. The span at 94 to 149 (GKHEEGPSAMMQKRDRDDRPRRDGDRPDRGGFGDRGPRPDRGDRDDRPRRPREDRA) shows a compositional bias: basic and acidic residues.

It belongs to the bacterial ribosomal protein bS6 family.

Binds together with bS18 to 16S ribosomal RNA. The protein is Small ribosomal subunit protein bS6 of Rhizobium meliloti (strain 1021) (Ensifer meliloti).